Consider the following 496-residue polypeptide: MIPIIALIGRPNVGKSTFFNRLTQTANALVADFPGLTRDRQYGHAEIENHKFIIIDTGGINGIEGIENIQKHMTHQSFLAIEEADVVLFILDARAGLLPADLEIAKHLRKRKKATFLVANKIDGMNSDTALTDFYSLALGKVYGIAASHGRGVAQLMSSVITPFVPEKPIIELSEEELNSSYWEKQKTEVDKTDFLESKKFLCNPESLPIKLAIVGRPNVGKSTLVNHILAQDRMLVYDIPGTTRDSIYIPLIRNNREYIFIDTAGVRKSAKIKEKVERFSVIKTLKAIENANVVLLVIDANEGVSDQDLSLLSFILNSGRSLVITVNKWDAISSEKRKQIKNSLDLRLGFMDFARTHFISALHGSGVENLFKSIKEAYDCSTKRINTSLLTRIMQLAKEEHEPPLVRGRRVKLKYAHSGGYNPLIVVIHGNQVTAINDSYKRYLMNYFRRSLKIIGAPIRIQFKESENPFASKRNTLTPNQVRKRKRLITHLKKR.

2 consecutive EngA-type G domains span residues 3–168 (PIIA…VPEK) and 210–383 (IKLA…DCST). GTP is bound by residues 9 to 16 (GRPNVGKS), 56 to 60 (DTGGI), 120 to 123 (NKID), 216 to 223 (GRPNVGKS), 263 to 267 (DTAGV), and 328 to 331 (NKWD). The KH-like domain occupies 384 to 468 (KRINTSLLTR…PIRIQFKESE (85 aa)).

It belongs to the TRAFAC class TrmE-Era-EngA-EngB-Septin-like GTPase superfamily. EngA (Der) GTPase family. As to quaternary structure, associates with the 50S ribosomal subunit.

In terms of biological role, GTPase that plays an essential role in the late steps of ribosome biogenesis. This Hamiltonella defensa subsp. Acyrthosiphon pisum (strain 5AT) protein is GTPase Der.